The primary structure comprises 218 residues: Cytochrome b6 (218 aa).

Residues 35 to 55 (IFYCLGGITLVCFLIQFATGF) form a helical membrane-spanning segment. Cysteine 38 is a heme c binding site. Heme b-binding residues include histidine 89 and histidine 103. The next 3 helical transmembrane spans lie at 93 to 113 (ASMM…TGGF), 119 to 139 (LTWV…VTGY), and 189 to 209 (LHTF…FLMI). Heme b is bound by residues histidine 190 and histidine 205.

The protein belongs to the cytochrome b family. PetB subfamily. The 4 large subunits of the cytochrome b6-f complex are cytochrome b6, subunit IV (17 kDa polypeptide, PetD), cytochrome f and the Rieske protein, while the 4 small subunits are PetG, PetL, PetM and PetN. The complex functions as a dimer. The cofactor is heme b. It depends on heme c as a cofactor.

It localises to the cellular thylakoid membrane. Component of the cytochrome b6-f complex, which mediates electron transfer between photosystem II (PSII) and photosystem I (PSI), cyclic electron flow around PSI, and state transitions. The protein is Cytochrome b6 of Parasynechococcus marenigrum (strain WH8102).